Here is a 660-residue protein sequence, read N- to C-terminus: DNA ligase (660 aa).

NAD(+) is bound by residues 32–36 (DEVYD), 81–82 (SM), and Glu112. Lys114 acts as the N6-AMP-lysine intermediate in catalysis. NAD(+)-binding residues include Arg135, Glu169, Lys284, and Lys308. 4 residues coordinate Zn(2+): Cys402, Cys405, Cys418, and Cys423. One can recognise a BRCT domain in the interval 578 to 660 (VENSPLAHKT…ELLKEAGIEA (83 aa)).

Belongs to the NAD-dependent DNA ligase family. LigA subfamily. The cofactor is Mg(2+). Mn(2+) is required as a cofactor.

It catalyses the reaction NAD(+) + (deoxyribonucleotide)n-3'-hydroxyl + 5'-phospho-(deoxyribonucleotide)m = (deoxyribonucleotide)n+m + AMP + beta-nicotinamide D-nucleotide.. Functionally, DNA ligase that catalyzes the formation of phosphodiester linkages between 5'-phosphoryl and 3'-hydroxyl groups in double-stranded DNA using NAD as a coenzyme and as the energy source for the reaction. It is essential for DNA replication and repair of damaged DNA. The polypeptide is DNA ligase (Nitratiruptor sp. (strain SB155-2)).